Consider the following 1047-residue polypeptide: Suppression of tumorigenicity 18 protein (1047 aa).

Disordered regions lie at residues 41-92, 168-221, and 251-286; these read TAED…HSTA, FLIH…VPKY, and DSET…SESL. Residues 52-65 are compositionally biased toward basic residues; sequence NKRKSLLMKPRHYS. Basic and acidic residues predominate over residues 171 to 181; the sequence is HSDDGRDKIDD. 2 CCHHC-type zinc fingers span residues 359 to 402 and 403 to 446; these read PRPE…PLEI and LAMH…KLAM. Zn(2+) contacts are provided by C368, C373, H386, C392, C412, C417, H430, and C436. Disordered regions lie at residues 523-563 and 672-710; these read GRKT…SYSY and YSKT…SPKP. Over residues 550–563 the composition is skewed to polar residues; the sequence is AHTQSPGRASSYSY. Residues 677 to 687 are compositionally biased toward basic and acidic residues; that stretch reads GKTEEEKEKDP. 4 consecutive CCHHC-type zinc fingers follow at residues 715–758, 759–802, 807–850, and 860–903; these read RDLK…LKSL, MAAN…GVKM, EEKE…QKEN, and KLNK…IKKG. Residues C724, C729, H742, C748, C768, C773, H786, C792, C816, C821, H834, C840, C869, C874, H887, and C893 each contribute to the Zn(2+) site. Positions 920–992 form a coiled coil; sequence IESDEEIRHL…AGLSQALISS (73 aa).

Belongs to the MYT1 family. As to expression, detected at low levels in heart, liver, kidney, skeletal muscle, pancreas, testis, ovary and prostate. Detected at even lower levels in mammary epithelial cells and breast cancer cells.

It localises to the nucleus. Its function is as follows. Repressor that binds to DNA sequences containing a bipartite element consisting of a direct repeat of the sequence 5'-AAAGTTT-3' separated by 2-9 nucleotides. Represses basal transcription activity from target promoters. Inhibits colony formation in cultured breast cancer cells. This is Suppression of tumorigenicity 18 protein (ST18) from Homo sapiens (Human).